The following is a 142-amino-acid chain: Hemoglobin subunit alpha-1 (142 aa).

N-acetylserine is present on Ser1. The Globin domain occupies 1-142 (SLSDKDKAAV…VALALAERYR (142 aa)). His59 serves as a coordination point for O2. Position 88 (His88) interacts with heme b.

It belongs to the globin family. As to quaternary structure, hb1 is a heterotetramer of two alpha-2 chains and two beta chains, while Hb2 is a heterotetramer of two alpha-2 chains and two beta chains. In terms of tissue distribution, red blood cells.

In terms of biological role, involved in oxygen transport from gills to the various peripheral tissues. The polypeptide is Hemoglobin subunit alpha-1 (hba1) (Notothenia angustata (Rockcod)).